Consider the following 351-residue polypeptide: Transmembrane protein 185-like (351 aa).

8 helical membrane-spanning segments follow: residues 16–36, 41–61, 81–101, 113–133, 154–174, 178–198, 212–232, and 244–264; these read LIYA…DGII, WAVF…ASVG, FKAM…EVLV, WLLV…ACVW, FIFI…VVCV, ILMS…VLFL, ITMA…EILL, and YVPV…TTFG.

It belongs to the TMEM185 family.

It localises to the membrane. The chain is Transmembrane protein 185-like from Danio rerio (Zebrafish).